The following is a 390-amino-acid chain: Tryptophan synthase beta chain 2 (390 aa).

Position 83 is an N6-(pyridoxal phosphate)lysine (lysine 83).

The protein belongs to the TrpB family. In terms of assembly, tetramer of two alpha and two beta chains. It depends on pyridoxal 5'-phosphate as a cofactor.

The catalysed reaction is (1S,2R)-1-C-(indol-3-yl)glycerol 3-phosphate + L-serine = D-glyceraldehyde 3-phosphate + L-tryptophan + H2O. Its pathway is amino-acid biosynthesis; L-tryptophan biosynthesis; L-tryptophan from chorismate: step 5/5. The beta subunit is responsible for the synthesis of L-tryptophan from indole and L-serine. The sequence is that of Tryptophan synthase beta chain 2 (trpB2) from Methanothermobacter marburgensis (strain ATCC BAA-927 / DSM 2133 / JCM 14651 / NBRC 100331 / OCM 82 / Marburg) (Methanobacterium thermoautotrophicum).